A 316-amino-acid polypeptide reads, in one-letter code: Ribose-phosphate pyrophosphokinase (316 aa).

ATP-binding positions include 39-41 and 98-99; these read DGE and RQ. Mg(2+) is bound by residues histidine 133 and aspartate 172. The active site involves lysine 195. D-ribose 5-phosphate-binding positions include arginine 197, aspartate 221, and 225-229; that span reads DTANT.

It belongs to the ribose-phosphate pyrophosphokinase family. Class I subfamily. In terms of assembly, homohexamer. Requires Mg(2+) as cofactor.

The protein resides in the cytoplasm. It carries out the reaction D-ribose 5-phosphate + ATP = 5-phospho-alpha-D-ribose 1-diphosphate + AMP + H(+). It participates in metabolic intermediate biosynthesis; 5-phospho-alpha-D-ribose 1-diphosphate biosynthesis; 5-phospho-alpha-D-ribose 1-diphosphate from D-ribose 5-phosphate (route I): step 1/1. Its function is as follows. Involved in the biosynthesis of the central metabolite phospho-alpha-D-ribosyl-1-pyrophosphate (PRPP) via the transfer of pyrophosphoryl group from ATP to 1-hydroxyl of ribose-5-phosphate (Rib-5-P). In Nitrosomonas europaea (strain ATCC 19718 / CIP 103999 / KCTC 2705 / NBRC 14298), this protein is Ribose-phosphate pyrophosphokinase.